We begin with the raw amino-acid sequence, 337 residues long: Nicotinate-nucleotide--dimethylbenzimidazole phosphoribosyltransferase (337 aa).

Catalysis depends on glutamate 305, which acts as the Proton acceptor.

This sequence belongs to the CobT family.

The enzyme catalyses 5,6-dimethylbenzimidazole + nicotinate beta-D-ribonucleotide = alpha-ribazole 5'-phosphate + nicotinate + H(+). Its pathway is nucleoside biosynthesis; alpha-ribazole biosynthesis; alpha-ribazole from 5,6-dimethylbenzimidazole: step 1/2. Functionally, catalyzes the synthesis of alpha-ribazole-5'-phosphate from nicotinate mononucleotide (NAMN) and 5,6-dimethylbenzimidazole (DMB). The protein is Nicotinate-nucleotide--dimethylbenzimidazole phosphoribosyltransferase of Roseobacter denitrificans (strain ATCC 33942 / OCh 114) (Erythrobacter sp. (strain OCh 114)).